Here is a 187-residue protein sequence, read N- to C-terminus: Large ribosomal subunit protein uL6 (187 aa).

This sequence belongs to the universal ribosomal protein uL6 family. As to quaternary structure, part of the 50S ribosomal subunit.

This protein binds to the 23S rRNA, and is important in its secondary structure. It is located near the subunit interface in the base of the L7/L12 stalk, and near the tRNA binding site of the peptidyltransferase center. This Thermosynechococcus vestitus (strain NIES-2133 / IAM M-273 / BP-1) protein is Large ribosomal subunit protein uL6.